The following is a 324-amino-acid chain: Methionyl-tRNA formyltransferase (324 aa).

114–117 is a binding site for (6S)-5,6,7,8-tetrahydrofolate; that stretch reads SLLP.

Belongs to the Fmt family.

It catalyses the reaction L-methionyl-tRNA(fMet) + (6R)-10-formyltetrahydrofolate = N-formyl-L-methionyl-tRNA(fMet) + (6S)-5,6,7,8-tetrahydrofolate + H(+). Attaches a formyl group to the free amino group of methionyl-tRNA(fMet). The formyl group appears to play a dual role in the initiator identity of N-formylmethionyl-tRNA by promoting its recognition by IF2 and preventing the misappropriation of this tRNA by the elongation apparatus. The chain is Methionyl-tRNA formyltransferase from Parabacteroides distasonis (strain ATCC 8503 / DSM 20701 / CIP 104284 / JCM 5825 / NCTC 11152).